We begin with the raw amino-acid sequence, 297 residues long: Formamidopyrimidine-DNA glycosylase (297 aa).

Proline 2 serves as the catalytic Schiff-base intermediate with DNA. The Proton donor role is filled by glutamate 3. Lysine 58 serves as the catalytic Proton donor; for beta-elimination activity. Residues histidine 106, arginine 133, and arginine 178 each coordinate DNA. The FPG-type zinc finger occupies 263–297 (FVYDRAGEPCRICGTPIRQILQGQRSTFYCPHCQH). Residue arginine 287 is the Proton donor; for delta-elimination activity of the active site.

It belongs to the FPG family. Monomer. It depends on Zn(2+) as a cofactor.

It catalyses the reaction Hydrolysis of DNA containing ring-opened 7-methylguanine residues, releasing 2,6-diamino-4-hydroxy-5-(N-methyl)formamidopyrimidine.. It carries out the reaction 2'-deoxyribonucleotide-(2'-deoxyribose 5'-phosphate)-2'-deoxyribonucleotide-DNA = a 3'-end 2'-deoxyribonucleotide-(2,3-dehydro-2,3-deoxyribose 5'-phosphate)-DNA + a 5'-end 5'-phospho-2'-deoxyribonucleoside-DNA + H(+). Functionally, involved in base excision repair of DNA damaged by oxidation or by mutagenic agents. Acts as a DNA glycosylase that recognizes and removes damaged bases. Has a preference for oxidized purines, such as 7,8-dihydro-8-oxoguanine (8-oxoG). Has AP (apurinic/apyrimidinic) lyase activity and introduces nicks in the DNA strand. Cleaves the DNA backbone by beta-delta elimination to generate a single-strand break at the site of the removed base with both 3'- and 5'-phosphates. This chain is Formamidopyrimidine-DNA glycosylase, found in Cupriavidus metallidurans (strain ATCC 43123 / DSM 2839 / NBRC 102507 / CH34) (Ralstonia metallidurans).